The primary structure comprises 58 residues: Probable spore germination protein GerPD (58 aa).

In terms of biological role, required for the formation of functionally normal spores. Could be involved in the establishment of normal spore coat structure and/or permeability, which allows the access of germinants to their receptor. This chain is Probable spore germination protein GerPD (gerPD), found in Bacillus subtilis (strain 168).